The primary structure comprises 124 residues: Small ribosomal subunit protein uS12 (124 aa).

At D89 the chain carries 3-methylthioaspartic acid.

Belongs to the universal ribosomal protein uS12 family. As to quaternary structure, part of the 30S ribosomal subunit. Contacts proteins S8 and S17. May interact with IF1 in the 30S initiation complex.

In terms of biological role, with S4 and S5 plays an important role in translational accuracy. Interacts with and stabilizes bases of the 16S rRNA that are involved in tRNA selection in the A site and with the mRNA backbone. Located at the interface of the 30S and 50S subunits, it traverses the body of the 30S subunit contacting proteins on the other side and probably holding the rRNA structure together. The combined cluster of proteins S8, S12 and S17 appears to hold together the shoulder and platform of the 30S subunit. This chain is Small ribosomal subunit protein uS12, found in Thermoanaerobacter pseudethanolicus (strain ATCC 33223 / 39E) (Clostridium thermohydrosulfuricum).